A 352-amino-acid chain; its full sequence is Pejvakin (352 aa).

The protein belongs to the gasdermin family. As to quaternary structure, interacts with MAP1LC3B; interaction is direct. Interacts with IQGAP1. Interacts with ROCK2. Interacts with TRIOBP. As to expression, in ear, it is detected in the organ of Corti and the spiral ganglion within the cochlea in the sensory areas of the vestibule (cristae ampullares of the semicircular ducts, and maculae of the saccule and utricle) and in the first 3 relays (cochlear nuclei, superior olivary complex and inferior colliculus) of the afferent auditory pathway. Detected in hair cells of the cochlea and vestibule but not in neurons. In the afferent auditory pathway, it is present in the cell bodies of neurons but not in fiber bundles such as the trapezoid body in the brainstem. Also detected in spiral ganglion cells, which form the auditory nerve and project to the cochlear nuclei in the brainstem. Also present in the cochlear nuclei, the superior olive and the inferior colliculus (at protein level). Expressed in all the adult organs tested: brain, eye, inner ear, heart, lung, kidney, liver, intestine, testis and weakly in skeletal muscle.

The protein resides in the peroxisome membrane. Its subcellular location is the cell projection. It localises to the cilium. Peroxisome-associated protein required to protect auditory hair cells against noise-induced damage. Acts by regulating noise-induced peroxisome proliferation in auditory hair cells and neurons, and promoting autophagic degradation of damaged peroxisomes (pexophagy). Noise overexposure increases reactive oxygen species (ROS) levels, causing oxidative damage to auditory hair cells and resulting in hearing loss. PJVK acts as a ROS sensor that recruits the autophagy machinery to trigger pexophagy of peroxisomes damaged by oxidative stress. In addition to pexophagy, also required to promote peroxisome proliferation in response to sound overstimulation. The chain is Pejvakin from Mus musculus (Mouse).